A 332-amino-acid polypeptide reads, in one-letter code: Fructose-1,6-bisphosphatase class 1 (332 aa).

Glu-89, Asp-110, Leu-112, and Asp-113 together coordinate Mg(2+). Substrate contacts are provided by residues 113 to 116 (DGSS), Asn-206, Tyr-239, 257 to 259 (YLY), and Lys-269. Glu-275 provides a ligand contact to Mg(2+).

Belongs to the FBPase class 1 family. Homotetramer. Mg(2+) serves as cofactor.

Its subcellular location is the cytoplasm. It catalyses the reaction beta-D-fructose 1,6-bisphosphate + H2O = beta-D-fructose 6-phosphate + phosphate. It participates in carbohydrate biosynthesis; gluconeogenesis. In Citrobacter koseri (strain ATCC BAA-895 / CDC 4225-83 / SGSC4696), this protein is Fructose-1,6-bisphosphatase class 1.